Reading from the N-terminus, the 347-residue chain is Guanine nucleotide-binding protein alpha-6 subunit (347 aa).

Residues glycine 30–valine 347 enclose the G-alpha domain. The tract at residues glutamine 33–threonine 46 is G1 motif. Residues glycine 38–serine 45, leucine 172–threonine 178, aspartate 197–glutamine 201, asparagine 266–aspartate 269, and alanine 322 contribute to the GTP site. Mg(2+)-binding residues include serine 45 and threonine 178. The tract at residues aspartate 170–threonine 178 is G2 motif. The tract at residues methionine 193 to arginine 202 is G3 motif. Positions isoleucine 262–aspartate 269 are G4 motif. Residues threonine 320–threonine 325 form a G5 motif region.

It belongs to the G-alpha family. In terms of assembly, g proteins are composed of 3 units; alpha, beta and gamma. The alpha chain contains the guanine nucleotide binding site.

Guanine nucleotide-binding proteins (G proteins) are involved as modulators or transducers in various transmembrane signaling systems. G alpha-6 is involved in the folic acid chemotaxis signal transduction pathway. This Dictyostelium discoideum (Social amoeba) protein is Guanine nucleotide-binding protein alpha-6 subunit (gpaF).